A 37-amino-acid polypeptide reads, in one-letter code: Large ribosomal subunit protein bL36 (37 aa).

It belongs to the bacterial ribosomal protein bL36 family.

The protein is Large ribosomal subunit protein bL36 of Aliivibrio fischeri (strain ATCC 700601 / ES114) (Vibrio fischeri).